Reading from the N-terminus, the 490-residue chain is Pleckstrin homology domain-containing family O member 2 (490 aa).

Residues 18 to 119 enclose the PH domain; that stretch reads MVDKAGWIKK…WIKALNEGIN (102 aa). A phosphoserine mark is found at Ser164 and Ser167. Positions 173-402 are disordered; it reads LDLDVPDSGP…DLLGEGPRHP (230 aa). Low complexity predominate over residues 230–243; sequence APTPVSASSEVSPE. Thr232 is subject to Phosphothreonine. Phosphoserine is present on residues Ser235, Ser237, and Ser238. A compositionally biased stretch (acidic residues) spans 244–257; that stretch reads SQEDSETPAEEDSG. Ser273 carries the post-translational modification Phosphoserine. The segment covering 277–297 has biased composition (low complexity); it reads PSPQEAPAAESAEPSQAPCSE. Residues Thr298 and Thr311 each carry the phosphothreonine modification. Phosphoserine occurs at positions 390 and 468. The stretch at 439-481 forms a coiled coil; the sequence is SAETLLSQAVEQLRQATQVLQEMRDLGELSQEAPGLREKRKEL.

The sequence is that of Pleckstrin homology domain-containing family O member 2 (PLEKHO2) from Homo sapiens (Human).